A 125-amino-acid polypeptide reads, in one-letter code: Succinate dehydrogenase cytochrome b556 subunit (125 aa).

Over 1 to 29 (MTKTKQEIYNKRPTSPHLTIYKPQISSTL) the chain is Cytoplasmic. A helical membrane pass occupies residues 30–55 (SILHRMTGVALFFAVSILAWWFILSK). Topologically, residues 56 to 68 (FDSNYIKLANCCC) are periplasmic. Residues 69 to 89 (IIKICLILTSFAWFYHLCNGI) traverse the membrane as a helical segment. His84 provides a ligand contact to heme. The Cytoplasmic portion of the chain corresponds to 90–104 (RHLFWDIGLGFSIKA). Residues 105–125 (VNLTGWSVVICSVLFTILLWV) form a helical membrane-spanning segment.

The protein belongs to the cytochrome b560 family. Part of an enzyme complex containing four subunits: a flavoprotein, an iron-sulfur protein, plus two membrane-anchoring proteins, SdhC and SdhD. The complex can form homotrimers. The cofactor is heme.

Its subcellular location is the cell inner membrane. The protein operates within carbohydrate metabolism; tricarboxylic acid cycle. Functionally, membrane-anchoring subunit of succinate dehydrogenase (SDH). This chain is Succinate dehydrogenase cytochrome b556 subunit (sdhC), found in Rickettsia bellii (strain RML369-C).